The primary structure comprises 522 residues: DNA-binding protein Ikaros (522 aa).

Disordered regions lie at residues 1–48 (MEME…HNNR) and 96–115 (AKVNGSHAGGPDSKGPYSSA). C2H2-type zinc fingers lie at residues 125–147 (LKCDICGIVCIGPNVLMVHKRSH), 153–175 (FQCTQCGASFTQKGNLLRHIKLH), 181–203 (FKCHLCNYACRRRDALSGHLRTH), and 209–232 (HKCAYCGRSYKQRSSLEEHKERCH). Residues 379–406 (KSASSEKDGSPSHSGQDSTDTESNNEEK) are disordered. 2 C2H2-type zinc fingers span residues 468–490 (YRCEHCRILFLDHVMYTIHMGCH) and 496–520 (FECNLCGHRSQDRYEFSSHMTRGEH).

The protein belongs to the Ikaros C2H2-type zinc-finger protein family. As to expression, expression mainly limited to thymus, spleen and pronephros. Very low expression in liver. No expression in testis, brain, eye and muscle.

It is found in the nucleus. Functionally, binds and activates the enhancer (delta-A element) of the CD3-delta gene. Functions in the specification and the maturation of the T-lymphocyte. Also interacts with a critical control element in the TDT (terminal deoxynucleotidyltransferase) promoter as well as with the promoters for other genes expressed during early stages of B- and T-cell development. Function is isoform-specific and is modulated by dominant-negative inactive isoforms. This is DNA-binding protein Ikaros (ikzf1) from Oncorhynchus mykiss (Rainbow trout).